Consider the following 293-residue polypeptide: Glutamyl-Q tRNA(Asp) synthetase (293 aa).

L-glutamate is bound by residues 26–30 (RYAPS) and Asp-62. A 'HIGH' region motif is present at residues 29–39 (PSPTGALHLGN). Zn(2+)-binding residues include Cys-118, Cys-120, Tyr-131, and Cys-135. Residues Tyr-178 and Arg-196 each coordinate L-glutamate. The short motif at 234–238 (KLSKR) is the 'KMSKS' region element. Position 237 (Lys-237) interacts with ATP.

It belongs to the class-I aminoacyl-tRNA synthetase family. GluQ subfamily. Zn(2+) is required as a cofactor.

In terms of biological role, catalyzes the tRNA-independent activation of glutamate in presence of ATP and the subsequent transfer of glutamate onto a tRNA(Asp). Glutamate is transferred on the 2-amino-5-(4,5-dihydroxy-2-cyclopenten-1-yl) moiety of the queuosine in the wobble position of the QUC anticodon. This is Glutamyl-Q tRNA(Asp) synthetase from Parasynechococcus marenigrum (strain WH8102).